The sequence spans 635 residues: Biosynthetic arginine decarboxylase (635 aa).

The residue at position 100 (K100) is an N6-(pyridoxal phosphate)lysine. 282–292 (VDIGGGLGVDY) contacts substrate.

This sequence belongs to the Orn/Lys/Arg decarboxylase class-II family. SpeA subfamily. The cofactor is Mg(2+). Requires pyridoxal 5'-phosphate as cofactor.

It catalyses the reaction L-arginine + H(+) = agmatine + CO2. It participates in amine and polyamine biosynthesis; agmatine biosynthesis; agmatine from L-arginine: step 1/1. Functionally, catalyzes the biosynthesis of agmatine from arginine. The protein is Biosynthetic arginine decarboxylase of Geobacter metallireducens (strain ATCC 53774 / DSM 7210 / GS-15).